We begin with the raw amino-acid sequence, 362 residues long: Cobalt-precorrin-5B C(1)-methyltransferase (362 aa).

Belongs to the CbiD family.

It catalyses the reaction Co-precorrin-5B + S-adenosyl-L-methionine = Co-precorrin-6A + S-adenosyl-L-homocysteine. The protein operates within cofactor biosynthesis; adenosylcobalamin biosynthesis; cob(II)yrinate a,c-diamide from sirohydrochlorin (anaerobic route): step 6/10. Catalyzes the methylation of C-1 in cobalt-precorrin-5B to form cobalt-precorrin-6A. This is Cobalt-precorrin-5B C(1)-methyltransferase from Burkholderia lata (strain ATCC 17760 / DSM 23089 / LMG 22485 / NCIMB 9086 / R18194 / 383).